The primary structure comprises 218 residues: 7-cyano-7-deazaguanine synthase (218 aa).

10–20 contacts ATP; that stretch reads FSGGQDSTTCL. C186, C195, C198, and C201 together coordinate Zn(2+).

This sequence belongs to the QueC family. In terms of assembly, homodimer. The cofactor is Zn(2+).

It catalyses the reaction 7-carboxy-7-deazaguanine + NH4(+) + ATP = 7-cyano-7-deazaguanine + ADP + phosphate + H2O + H(+). It functions in the pathway purine metabolism; 7-cyano-7-deazaguanine biosynthesis. In terms of biological role, catalyzes the ATP-dependent conversion of 7-carboxy-7-deazaguanine (CDG) to 7-cyano-7-deazaguanine (preQ(0)). This is 7-cyano-7-deazaguanine synthase from Exiguobacterium sibiricum (strain DSM 17290 / CCUG 55495 / CIP 109462 / JCM 13490 / 255-15).